Consider the following 178-residue polypeptide: HTH-type transcriptional regulator SutR (178 aa).

The HTH cro/C1-type domain maps to 12–66 (LKQLRQQRGWSLSRLAEATGVSKAMLGQIERNESSPTVATLWKIATGLNVPFSTF). A DNA-binding region (H-T-H motif) is located at residues 23–42 (LSRLAEATGVSKAMLGQIER). One can recognise a Cupin type-2 domain in the interval 105–171 (QMASGAISES…GGEQTVHFHS (67 aa)).

Regulates the expression of 12-16 transcription units involved in various steps of sulfur utilization. Represses expression of pfkB, fliZ, cysE, ydcO and its own expression. Activates expression of ypfN. Acts by binding to SutR boxes. This chain is HTH-type transcriptional regulator SutR, found in Escherichia coli (strain K12).